The chain runs to 307 residues: Heme A synthase (307 aa).

At 1-6 (MKFALR) the chain is on the cytoplasmic side. The chain crosses the membrane as a helical span at residues 7–27 (LLSVITTFVMLIVLIGGALVT). The Extracellular portion of the chain corresponds to 28-65 (KTGSGLGCGRQWPLCHGRFFPEMNPASIIEWSHRMSTG). Cys35 and Cys42 form a disulfide bridge. Glu57 is a catalytic residue. His60 serves as a coordination point for heme o. The chain crosses the membrane as a helical span at residues 66–86 (VSTILVLALAVLCWKKISPVF). Over 87 to 92 (RETKFL) the chain is Cytoplasmic. Residues 93–113 (VIMSIIFLLLQALLGALAVVF) form a helical membrane-spanning segment. Residues 114–121 (GSNALVMA) are Extracellular-facing. A helical membrane pass occupies residues 122-142 (LHFGISLISFASVLLLALLVF). His123 lines the heme o pocket. Topologically, residues 143 to 161 (EATRSETKLVKPLHIGKKM) are cytoplasmic. Residues 162-182 (QFHIYGLITYTYIVVYTGAYV) traverse the membrane as a helical segment. Residues 183 to 216 (RHTKSSLACSVFPFCSKDGALPAYFNQWVQMSHR) are Extracellular-facing. Cys191 and Cys197 form a disulfide bridge. His215 contributes to the heme b binding site. A helical transmembrane segment spans residues 217–237 (AAALLLFVWIFVAMFHAMKHY). Over 238–242 (KEQKQ) the chain is Cytoplasmic. Residues 243–263 (LYYGWIISAILITLQAISGVM) form a helical membrane-spanning segment. Residues 264–274 (SVYSQLALGYA) lie on the Extracellular side of the membrane. The helical transmembrane segment at 275–295 (LAHSFFISCLFGVLCYFCLLI) threads the bilayer. His277 serves as a coordination point for heme b. At 296–307 (ARFKYESKEPFK) the chain is on the cytoplasmic side.

The protein belongs to the COX15/CtaA family. Type 1 subfamily. Interacts with CtaB. Heme b is required as a cofactor.

The protein localises to the cell membrane. It catalyses the reaction Fe(II)-heme o + 2 A + H2O = Fe(II)-heme a + 2 AH2. The protein operates within porphyrin-containing compound metabolism; heme A biosynthesis; heme A from heme O: step 1/1. Its function is as follows. Catalyzes the conversion of heme O to heme A by two successive hydroxylations of the methyl group at C8. The first hydroxylation forms heme I, the second hydroxylation results in an unstable dihydroxymethyl group, which spontaneously dehydrates, resulting in the formyl group of heme A. This Bacillus pumilus (strain SAFR-032) protein is Heme A synthase.